Here is a 225-residue protein sequence, read N- to C-terminus: Lipoprotein-releasing system ATP-binding protein LolD (225 aa).

The 221-residue stretch at 5-225 (LEVMDLTKGY…RLVDGRVVAD (221 aa)) folds into the ABC transporter domain. An ATP-binding site is contributed by 41 to 48 (GASGTGKS).

It belongs to the ABC transporter superfamily. Lipoprotein translocase (TC 3.A.1.125) family. In terms of assembly, the complex is composed of two ATP-binding proteins (LolD) and two transmembrane proteins (LolC and LolE).

The protein localises to the cell inner membrane. Functionally, part of the ABC transporter complex LolCDE involved in the translocation of mature outer membrane-directed lipoproteins, from the inner membrane to the periplasmic chaperone, LolA. Responsible for the formation of the LolA-lipoprotein complex in an ATP-dependent manner. This is Lipoprotein-releasing system ATP-binding protein LolD from Geobacter metallireducens (strain ATCC 53774 / DSM 7210 / GS-15).